The following is a 427-amino-acid chain: Trigger factor (427 aa).

One can recognise a PPIase FKBP-type domain in the interval G163–P248.

Belongs to the FKBP-type PPIase family. Tig subfamily.

It localises to the cytoplasm. The catalysed reaction is [protein]-peptidylproline (omega=180) = [protein]-peptidylproline (omega=0). In terms of biological role, involved in protein export. Acts as a chaperone by maintaining the newly synthesized protein in an open conformation. Functions as a peptidyl-prolyl cis-trans isomerase. This is Trigger factor from Listeria monocytogenes serotype 4a (strain HCC23).